The chain runs to 89 residues: Small ribosomal subunit protein uS15 (89 aa).

It belongs to the universal ribosomal protein uS15 family. As to quaternary structure, part of the 30S ribosomal subunit. Forms a bridge to the 50S subunit in the 70S ribosome, contacting the 23S rRNA.

In terms of biological role, one of the primary rRNA binding proteins, it binds directly to 16S rRNA where it helps nucleate assembly of the platform of the 30S subunit by binding and bridging several RNA helices of the 16S rRNA. Functionally, forms an intersubunit bridge (bridge B4) with the 23S rRNA of the 50S subunit in the ribosome. The chain is Small ribosomal subunit protein uS15 from Rhizobium leguminosarum bv. trifolii (strain WSM2304).